A 257-amino-acid chain; its full sequence is Phycoerythrobilin:ferredoxin oxidoreductase (257 aa).

Belongs to the HY2 family.

It carries out the reaction (3Z)-phycoerythrobilin + oxidized 2[4Fe-4S]-[ferredoxin] = 15,16-dihydrobiliverdin + reduced 2[4Fe-4S]-[ferredoxin] + 2 H(+). Functionally, catalyzes the two-electron reduction of the C2 and C3(1) diene system of 15,16-dihydrobiliverdin. This Synechococcus sp. (strain WH8020) protein is Phycoerythrobilin:ferredoxin oxidoreductase (pebB).